The following is an 880-amino-acid chain: Valine--tRNA ligase (880 aa).

Positions 49-59 (PNVTGRLHLGH) match the 'HIGH' region motif. The 'KMSKS' region signature appears at 525 to 529 (KMSKS). K528 is a binding site for ATP. Residues 809 to 879 (LEGLINIDEE…AVQKRMAELK (71 aa)) adopt a coiled-coil conformation.

This sequence belongs to the class-I aminoacyl-tRNA synthetase family. ValS type 1 subfamily. As to quaternary structure, monomer.

The protein resides in the cytoplasm. It catalyses the reaction tRNA(Val) + L-valine + ATP = L-valyl-tRNA(Val) + AMP + diphosphate. As ValRS can inadvertently accommodate and process structurally similar amino acids such as threonine, to avoid such errors, it has a 'posttransfer' editing activity that hydrolyzes mischarged Thr-tRNA(Val) in a tRNA-dependent manner. Catalyzes the attachment of valine to tRNA(Val). This is Valine--tRNA ligase from Bacillus subtilis (strain 168).